The following is a 442-amino-acid chain: Elongation factor 1-gamma (442 aa).

Positions 2-87 (AAGTLYTYPE…FLSNDALRGS (86 aa)) constitute a GST N-terminal domain. Residues 88–216 (TPQASAQVLQ…VKLCEKMAQF (129 aa)) enclose the GST C-terminal domain. Basic and acidic residues-rich tracts occupy residues 224–242 (MQPK…KEGG) and 249–263 (QEKK…KAAP). Positions 224–273 (MQPKKEAPAKKEKAGKEGGKQQQPQQEKKEKKKEEKKAAPAEEEMDECEA) are disordered. The EF-1-gamma C-terminal domain occupies 281–442 (AKDPYAHLPK…KSFNQGKIFK (162 aa)).

EF-1 is composed of four subunits: alpha, beta, delta, and gamma.

Its function is as follows. Probably plays a role in anchoring the complex to other cellular components. The polypeptide is Elongation factor 1-gamma (eef1g) (Carassius auratus (Goldfish)).